A 507-amino-acid chain; its full sequence is Natural resistance-associated macrophage protein 1 (507 aa).

The disordered stretch occupies residues methionine 1–leucine 36. Residues methionine 1 to lysine 39 are Cytoplasmic-facing. Residues glutamine 8–proline 22 show a composition bias toward polar residues. A helical transmembrane segment spans residues isoleucine 40–leucine 60. Residues leucine 61 to arginine 123 lie on the Extracellular side of the membrane. The helical transmembrane segment at isoleucine 124–aspartate 144 threads the bilayer. Residues asparagine 145 to glutamate 152 lie on the Cytoplasmic side of the membrane. A helical membrane pass occupies residues alanine 153–alanine 173. The Extracellular portion of the chain corresponds to arginine 174–glutamine 199. A helical membrane pass occupies residues alanine 200–valine 220. Over lysine 221 to threonine 245 the chain is Cytoplasmic. The helical transmembrane segment at isoleucine 246–phenylalanine 266 threads the bilayer. Residues tyrosine 267–glycine 305 lie on the Extracellular side of the membrane. Residues asparagine 280 and asparagine 294 are each glycosylated (N-linked (GlcNAc...) asparagine). A helical membrane pass occupies residues valine 306–alanine 326. Over alanine 327–arginine 353 the chain is Cytoplasmic. Residues phenylalanine 354–phenylalanine 374 traverse the membrane as a helical segment. The Extracellular segment spans residues arginine 375–glutamine 391. The helical transmembrane segment at serine 392–methionine 412 threads the bilayer. Residues glutamine 413–lysine 422 are Cytoplasmic-facing. Residues valine 423–tyrosine 443 traverse the membrane as a helical segment. Topologically, residues leucine 444–alanine 451 are extracellular. The chain crosses the membrane as a helical span at residues tyrosine 452–tryptophan 472. Residues threonine 473–glycine 507 are Cytoplasmic-facing.

Belongs to the NRAMP family.

The protein localises to the late endosome membrane. The protein resides in the lysosome membrane. The catalysed reaction is Zn(2+)(in) + H(+)(out) = Zn(2+)(out) + H(+)(in). The enzyme catalyses Fe(2+)(in) + H(+)(out) = Fe(2+)(out) + H(+)(in). It catalyses the reaction Mn(2+)(in) + H(+)(out) = Mn(2+)(out) + H(+)(in). Macrophage-specific antiporter that fluxes metal ions in either direction against a proton gradient. Localized to late endosomal lysosomal membranes, delivers bivalent cations from the cytosol into these acidic compartments where they may directly affect antimicrobial activity. Involved in iron metabolism and host natural resistance to infection with intracellular parasites. Pathogen resistance involves sequestration of Fe(2+) and Mn(2+), cofactors of both prokaryotic and eukaryotic catalases and superoxide dismutases, not only to protect the macrophage against its own generation of reactive oxygen species, but to deny the cations to the pathogen for synthesis of its protective enzymes. This chain is Natural resistance-associated macrophage protein 1 (Slc11a1), found in Rattus norvegicus (Rat).